A 270-amino-acid polypeptide reads, in one-letter code: Oxidoreductase claK (270 aa).

This sequence belongs to the avfA family.

The protein operates within pigment biosynthesis. Functionally, oxidoreductase; part of the gene cluster that mediates the biosynthesis of the bianthraquinone cladofulvin, a conidial pigment not required for virulence but that plays a role in fitness and resistance to environmental stresses including UV light and low-temperature stress. The pathway begins with the synthesis of atrochrysone thioester by the polyketide synthase (PKS) claG. The atrochrysone carboxyl ACP thioesterase claF then breaks the thioester bond and releases the atrochrysone carboxylic acid from claG. This compound is decarboxylated by claH to yield emodin, which is further converted to chrysophanol hydroquinone by the reductase claC and the dehydratase claB. The cytochrome monooxygenase P450 claM then catalyzes the dimerization of nataloe-emodin to cladofulvin. This is Oxidoreductase claK from Passalora fulva (Tomato leaf mold).